A 726-amino-acid polypeptide reads, in one-letter code: Replication restart protein PriA (726 aa).

Ile234 contributes to the ATP binding site. Residues 234–373 form the Helicase ATP-binding domain; that stretch reads IQSVLYKGVQ…LHRKCFYIKL (140 aa). A DEAH box motif is present at residues 316–319; the sequence is LEEH. Residues Cys431, Cys434, Cys440, Cys443, Cys458, Cys461, Cys471, and Cys474 each coordinate Zn(2+).

Belongs to the helicase family. PriA subfamily. As to quaternary structure, component of the replication restart primosome. The cofactor is Zn(2+).

The catalysed reaction is Couples ATP hydrolysis with the unwinding of duplex DNA by translocating in the 3'-5' direction.. It carries out the reaction ATP + H2O = ADP + phosphate + H(+). Functionally, initiates the restart of stalled replication forks, which reloads the replicative helicase on sites other than the origin of replication. Recognizes and binds to abandoned replication forks and remodels them to uncover a helicase loading site. Promotes assembly of the primosome at these replication forks. This is Replication restart protein PriA from Buchnera aphidicola subsp. Acyrthosiphon pisum (strain APS) (Acyrthosiphon pisum symbiotic bacterium).